Consider the following 152-residue polypeptide: SsrA-binding protein (152 aa).

The protein belongs to the SmpB family.

The protein resides in the cytoplasm. Required for rescue of stalled ribosomes mediated by trans-translation. Binds to transfer-messenger RNA (tmRNA), required for stable association of tmRNA with ribosomes. tmRNA and SmpB together mimic tRNA shape, replacing the anticodon stem-loop with SmpB. tmRNA is encoded by the ssrA gene; the 2 termini fold to resemble tRNA(Ala) and it encodes a 'tag peptide', a short internal open reading frame. During trans-translation Ala-aminoacylated tmRNA acts like a tRNA, entering the A-site of stalled ribosomes, displacing the stalled mRNA. The ribosome then switches to translate the ORF on the tmRNA; the nascent peptide is terminated with the 'tag peptide' encoded by the tmRNA and targeted for degradation. The ribosome is freed to recommence translation, which seems to be the essential function of trans-translation. The sequence is that of SsrA-binding protein from Rickettsia massiliae (strain Mtu5).